The following is a 239-amino-acid chain: Proteasome subunit beta type-6 (239 aa).

Position 2 is an N-acetylalanine (Ala2). The propeptide at 2–34 (AATLLAARGAGPAPAWGPEAFTPDWESREVSTG) is removed in mature form. The active-site Nucleophile is Thr35. A Phosphothreonine modification is found at Thr69.

The protein belongs to the peptidase T1B family. The 26S proteasome consists of a 20S proteasome core and two 19S regulatory subunits. The 20S proteasome core is a barrel-shaped complex made of 28 subunits that are arranged in four stacked rings. The two outer rings are each formed by seven alpha subunits, and the two inner rings are formed by seven beta subunits. The proteolytic activity is exerted by three beta-subunits PSMB5, PSMB6 and PSMB7. As to quaternary structure, (Microbial infection) Interacts with HIV-1 protein Tat.

The protein resides in the cytoplasm. It localises to the nucleus. It carries out the reaction Cleavage of peptide bonds with very broad specificity.. Component of the 20S core proteasome complex involved in the proteolytic degradation of most intracellular proteins. This complex plays numerous essential roles within the cell by associating with different regulatory particles. Associated with two 19S regulatory particles, forms the 26S proteasome and thus participates in the ATP-dependent degradation of ubiquitinated proteins. The 26S proteasome plays a key role in the maintenance of protein homeostasis by removing misfolded or damaged proteins that could impair cellular functions, and by removing proteins whose functions are no longer required. Associated with the PA200 or PA28, the 20S proteasome mediates ubiquitin-independent protein degradation. This type of proteolysis is required in several pathways including spermatogenesis (20S-PA200 complex) or generation of a subset of MHC class I-presented antigenic peptides (20S-PA28 complex). Within the 20S core complex, PSMB6 displays a peptidylglutamyl-hydrolizing activity also termed postacidic or caspase-like activity, meaning that the peptides bond hydrolysis occurs directly after acidic residues. This Homo sapiens (Human) protein is Proteasome subunit beta type-6.